Consider the following 526-residue polypeptide: Berberine bridge enzyme-like 11 (526 aa).

Positions 1 to 21 (MEKLLIICMLLISVLVATSQS) are cleaved as a signal peptide. The cysteines at positions 31 and 94 are disulfide-linked. 4 N-linked (GlcNAc...) asparagine glycosylation sites follow: N52, N136, N273, and N482. Positions 72–247 (TTPKPIAIIT…MGYKIRLVPV (176 aa)) constitute an FAD-binding PCMH-type domain. A cross-link (6-(S-cysteinyl)-8alpha-(pros-histidyl)-FAD (His-Cys)) is located at residues 109 to 171 (HDFEGLSYTS…NVLGFPAGLC (63 aa)).

This sequence belongs to the oxygen-dependent FAD-linked oxidoreductase family. FAD serves as cofactor. The FAD cofactor is bound via a bicovalent 6-S-cysteinyl, 8alpha-N1-histidyl FAD linkage.

It localises to the secreted. The protein localises to the cell wall. This is Berberine bridge enzyme-like 11 from Arabidopsis thaliana (Mouse-ear cress).